Consider the following 603-residue polypeptide: UvrABC system protein C (603 aa).

The 78-residue stretch at 15–92 (DQPGCYLMKD…IKKHDPRFNI (78 aa)) folds into the GIY-YIG domain. Residues 197-232 (KTVKNDLMKKMQEAAENMEFEKAGEFRDQINAIETT) form the UVR domain.

This sequence belongs to the UvrC family. Interacts with UvrB in an incision complex.

Its subcellular location is the cytoplasm. In terms of biological role, the UvrABC repair system catalyzes the recognition and processing of DNA lesions. UvrC both incises the 5' and 3' sides of the lesion. The N-terminal half is responsible for the 3' incision and the C-terminal half is responsible for the 5' incision. This is UvrABC system protein C from Listeria monocytogenes serotype 4a (strain HCC23).